Here is a 220-residue protein sequence, read N- to C-terminus: Uracil-DNA glycosylase 2 (220 aa).

Aspartate 65 (proton acceptor) is an active-site residue.

The protein belongs to the uracil-DNA glycosylase (UDG) superfamily. UNG family.

It is found in the cytoplasm. It catalyses the reaction Hydrolyzes single-stranded DNA or mismatched double-stranded DNA and polynucleotides, releasing free uracil.. In terms of biological role, excises uracil residues from the DNA which can arise as a result of misincorporation of dUMP residues by DNA polymerase or due to deamination of cytosine. This Bacteroides fragilis (strain ATCC 25285 / DSM 2151 / CCUG 4856 / JCM 11019 / LMG 10263 / NCTC 9343 / Onslow / VPI 2553 / EN-2) protein is Uracil-DNA glycosylase 2.